Reading from the N-terminus, the 412-residue chain is Cysteate synthase (412 aa).

K105 carries the N6-(pyridoxal phosphate)lysine modification. Residues N131 and T382 each coordinate pyridoxal 5'-phosphate.

This sequence belongs to the threonine synthase family. Cysteate synthase subfamily. As to quaternary structure, homotrimer. Requires pyridoxal 5'-phosphate as cofactor.

It carries out the reaction O-phospho-L-serine + sulfite + H(+) = L-cysteate + phosphate. It functions in the pathway cofactor biosynthesis; coenzyme M biosynthesis. Specifically catalyzes the beta-elimination of phosphate from L-phosphoserine and the beta-addition of sulfite to the dehydroalanine intermediate to produce L-cysteate. The chain is Cysteate synthase from Methanocorpusculum labreanum (strain ATCC 43576 / DSM 4855 / Z).